The primary structure comprises 205 residues: Isochorismatase domain-containing protein 2 (205 aa).

The protein belongs to the isochorismatase family. Interacts with CDKN2A.

It is found in the cytoplasm. The protein resides in the nucleus. In Macaca fascicularis (Crab-eating macaque), this protein is Isochorismatase domain-containing protein 2 (ISOC2).